The primary structure comprises 314 residues: Olfactory receptor 5B17 (314 aa).

The Extracellular portion of the chain corresponds to 1–23; sequence MENNTEVSEFILLGLTNAPELQV. Residue asparagine 3 is glycosylated (N-linked (GlcNAc...) asparagine). A helical membrane pass occupies residues 24-44; the sequence is PLFIMFTLIYLITLTGNLGMI. At 45 to 52 the chain is on the cytoplasmic side; that stretch reads ILILLDSH. Residues 53-73 traverse the membrane as a helical segment; that stretch reads LHTPMYFFLSNLSLAGIGYSS. Over 74 to 97 the chain is Extracellular; sequence AVTPKVLTGLLIEDKAISYSACAA. Cysteine 95 and cysteine 187 are oxidised to a cystine. The chain crosses the membrane as a helical span at residues 98–118; it reads QMFFCAVFATVENYLLSSMAY. The Cytoplasmic portion of the chain corresponds to 119 to 137; that stretch reads DRYAAVCNPLHYTTTMTTR. The helical transmembrane segment at 138 to 158 threads the bilayer; it reads VCACLAIGCYVIGFLNASIQI. The Extracellular portion of the chain corresponds to 159-194; that stretch reads GDTFRLSFCMSNVIHHFFCDKPAVITLTCSEKHISE. A helical membrane pass occupies residues 195–215; the sequence is LILVLISSFNVFFALLVTLIS. The Cytoplasmic segment spans residues 216 to 235; the sequence is YLFILITILKRHTGKGYQKP. Residues 236 to 256 form a helical membrane-spanning segment; sequence LSTCGSHLIAIFLFYITVIIM. Over 257–269 the chain is Extracellular; that stretch reads YIRPSSSHSMDTD. Residues 270–290 form a helical membrane-spanning segment; that stretch reads KIASVFYTMIIPMLSPIVYTL. The Cytoplasmic segment spans residues 291-314; it reads RNKDVKNAFMKVVEKAKYSLDSVF.

This sequence belongs to the G-protein coupled receptor 1 family.

Its subcellular location is the cell membrane. Functionally, odorant receptor. The sequence is that of Olfactory receptor 5B17 (OR5B17) from Homo sapiens (Human).